The sequence spans 241 residues: 3-oxoacyl-[acyl-carrier-protein] reductase FabG (241 aa).

Residues 13–16 (GASG), Ser-38, 57–58 (KV), and Asn-83 each bind NADP(+). Ser-135 is a binding site for substrate. Residue Tyr-148 is the Proton acceptor of the active site. NADP(+) contacts are provided by residues 148–152 (YCASK) and Ile-181.

This sequence belongs to the short-chain dehydrogenases/reductases (SDR) family. Homotetramer.

The catalysed reaction is a (3R)-hydroxyacyl-[ACP] + NADP(+) = a 3-oxoacyl-[ACP] + NADPH + H(+). Its pathway is lipid metabolism; fatty acid biosynthesis. Catalyzes the NADPH-dependent reduction of beta-ketoacyl-ACP substrates to beta-hydroxyacyl-ACP products, the first reductive step in the elongation cycle of fatty acid biosynthesis. The sequence is that of 3-oxoacyl-[acyl-carrier-protein] reductase FabG (fabG) from Rickettsia bellii (strain RML369-C).